The chain runs to 430 residues: GTPase Obg (430 aa).

The Obg domain maps to 1–158; that stretch reads MFVDQVKINV…IELQLELKVL (158 aa). Residues 122–143 are disordered; it reads GGRGNMRFASPRNPAPEISENG. Positions 159-334 constitute an OBG-type G domain; the sequence is ADVGLLGFPS…LVARTADVLE (176 aa). Residues 165-172, 190-194, 212-215, 282-285, and 315-317 each bind GTP; these read GFPSVGKS, FTTLV, DIPG, TKMD, and SSI. Ser172 and Thr192 together coordinate Mg(2+). Positions 353-430 constitute an OCT domain; that stretch reads YEFSSEKDFT…ILDFVFEFVE (78 aa).

It belongs to the TRAFAC class OBG-HflX-like GTPase superfamily. OBG GTPase family. Monomer. Requires Mg(2+) as cofactor.

Its subcellular location is the cytoplasm. In terms of biological role, an essential GTPase which binds GTP, GDP and possibly (p)ppGpp with moderate affinity, with high nucleotide exchange rates and a fairly low GTP hydrolysis rate. Plays a role in control of the cell cycle, stress response, ribosome biogenesis and in those bacteria that undergo differentiation, in morphogenesis control. The polypeptide is GTPase Obg (Pediococcus pentosaceus (strain ATCC 25745 / CCUG 21536 / LMG 10740 / 183-1w)).